The primary structure comprises 509 residues: Poly(A) RNA polymerase GLD2-B (509 aa).

Residues 88–125 (PGSPPSSFQNRKRRSDEGNSPYDVKRQRFQSPQEQTVN) are disordered. The segment covering 116–125 (FQSPQEQTVN) has biased composition (polar residues). Mg(2+)-binding residues include Asp240 and Asp242. The PAP-associated domain maps to 409-462 (LGDLLLGFLKYFAVEFDWSKDIISLREAKALPRTDDYEWRNKYICVEEPFDGSN).

Belongs to the DNA polymerase type-B-like family. GLD2 subfamily. In terms of assembly, component of a complex at least composed of cpeb1, cpsf1, tent2/gld2, pabpc1/ePAB, parn and sympk. Following oocyte maturation, parn is expelled from the complex. Interacts with rbfox2. Interacts with sympk. Requires Mg(2+) as cofactor. The cofactor is Mn(2+).

It localises to the cytoplasm. The enzyme catalyses RNA(n) + ATP = RNA(n)-3'-adenine ribonucleotide + diphosphate. In terms of biological role, cytoplasmic poly(A) RNA polymerase that adds successive AMP monomers to the 3'-end of specific RNAs, forming a poly(A) tail. In contrast to the canonical nuclear poly(A) RNA polymerase, it only adds poly(A) to selected cytoplasmic mRNAs during oocyte maturation. Plays a central role during oocyte maturation by mediating polyadenylation of dormant mRNAs, which contain 5'AAUAAA-3' sequence in their 3'-UTR. In immature oocytes, polyadenylation of poly(A) tails is counteracted by the ribonuclease parn. During maturation parn is excluded from the ribonucleoprotein complex, allowing poly(A) elongation and activation of mRNAs. May not play a role in replication-dependent histone mRNA degradation. This Xenopus laevis (African clawed frog) protein is Poly(A) RNA polymerase GLD2-B.